The chain runs to 52 residues: Phospholamban (52 aa).

Position 1 is an N-acetylmethionine (Met-1). Residues 1–31 (MEKVQYITRSALRRASTLEVNPQARQRLQEL) lie on the Cytoplasmic side of the membrane. Position 16 is a phosphoserine; by PKA (Ser-16). At Thr-17 the chain carries Phosphothreonine; by CaMK. A helical membrane pass occupies residues 32 to 52 (FVNFCLILICLLLICIIVMLL).

It belongs to the phospholamban family. Homopentamer. In terms of processing, phosphorylated in response to beta-adrenergic stimulation. Phosphorylation by PKA abolishes the inhibition of ATP2A2-mediated calcium uptake. In terms of tissue distribution, heart.

It is found in the endoplasmic reticulum membrane. It localises to the sarcoplasmic reticulum membrane. The protein localises to the mitochondrion membrane. Its subcellular location is the membrane. Its function is as follows. Reversibly inhibits the activity of ATP2A2/SERCA2 in cardiac sarcoplasmic reticulum by decreasing the apparent affinity of the ATPase for Ca(2+). Binds preferentially to the ATP-bound E1 conformational form of ATP2A2 which predominates at low Ca(2+) concentrations during the diastolic phase of the cardiac cycle. Inhibits ATP2A2 Ca(2+) affinity by disrupting its allosteric activation by ATP. Modulates the contractility of the heart muscle in response to physiological stimuli via its effects on ATP2A2. Modulates calcium re-uptake during muscle relaxation and plays an important role in calcium homeostasis in the heart muscle. The degree of ATP2A2 inhibition depends on the oligomeric state of PLN. ATP2A2 inhibition is alleviated by PLN phosphorylation. In Gallus gallus (Chicken), this protein is Phospholamban (PLN).